A 178-amino-acid polypeptide reads, in one-letter code: Large ribosomal subunit protein uL6 (178 aa).

Belongs to the universal ribosomal protein uL6 family. Part of the 50S ribosomal subunit.

In terms of biological role, this protein binds to the 23S rRNA, and is important in its secondary structure. It is located near the subunit interface in the base of the L7/L12 stalk, and near the tRNA binding site of the peptidyltransferase center. The chain is Large ribosomal subunit protein uL6 from Corynebacterium aurimucosum (strain ATCC 700975 / DSM 44827 / CIP 107346 / CN-1) (Corynebacterium nigricans).